Here is a 278-residue protein sequence, read N- to C-terminus: HTH-type transcriptional regulator HdfR (278 aa).

One can recognise an HTH lysR-type domain in the interval 1–58 (MDTELLKTFLEVSRTRHFGRAAEALYLTQSAVSFRIRQLENQLGVNLFTRHRNNIRLT). The H-T-H motif DNA-binding region spans 18–37 (FGRAAEALYLTQSAVSFRIR).

Belongs to the LysR transcriptional regulatory family.

In terms of biological role, negatively regulates the transcription of the flagellar master operon flhDC by binding to the upstream region of the operon. The sequence is that of HTH-type transcriptional regulator HdfR from Salmonella agona (strain SL483).